The primary structure comprises 90 residues: MSAVPFTRVLLISGFLAHLLLSTFVTLTVCKEVTEESDDLSKRNVLQRQLWAVGSFMGKKSLENTNRRSDEDMEISALFRGSPLKVKRSD.

The first 30 residues, 1 to 30 (MSAVPFTRVLLISGFLAHLLLSTFVTLTVC), serve as a signal peptide directing secretion. Residues 31-48 (KEVTEESDDLSKRNVLQR) constitute a propeptide that is removed on maturation. Glutamine 49 carries the pyrrolidone carboxylic acid modification. A Methionine amide modification is found at methionine 57. Residues 61 to 90 (SLENTNRRSDEDMEISALFRGSPLKVKRSD) constitute a propeptide that is removed on maturation.

This sequence belongs to the bombesin/neuromedin-B/ranatensin family. Expressed by the skin glands.

The protein localises to the secreted. The protein is [Phe8]-phyllolitorin of Phyllomedusa sauvagei (Sauvage's leaf frog).